A 629-amino-acid polypeptide reads, in one-letter code: Histone-lysine N-methyltransferase set9 (629 aa).

Positions 120 to 234 (CPFEVTTTNR…IGEEITVSYG (115 aa)) constitute an SET domain. Polar residues-rich tracts occupy residues 264-274 (SEASSTASTPA), 338-350 (EQNT…TTTD), 359-376 (NGVT…NQRA), and 390-400 (ESQNSSASTAP). Disordered regions lie at residues 264 to 400 (SEAS…STAP) and 586 to 629 (VSFG…RMTM). Basic and acidic residues predominate over residues 597-614 (SEPRTETEDSEACDERRN).

The protein belongs to the class V-like SAM-binding methyltransferase superfamily. Histone-lysine methyltransferase family. Suvar4-20 subfamily.

The protein resides in the nucleus. It is found in the chromosome. The enzyme catalyses L-lysyl(20)-[histone H4] + 3 S-adenosyl-L-methionine = N(6),N(6),N(6)-trimethyl-L-lysyl(20)-[histone H4] + 3 S-adenosyl-L-homocysteine + 3 H(+). Functionally, histone methyltransferase that trimethylates 'Lys-20' of histone H4 to form H4K20me3. In Aspergillus terreus (strain NIH 2624 / FGSC A1156), this protein is Histone-lysine N-methyltransferase set9 (set9).